The following is a 425-amino-acid chain: NAC domain-containing protein 10 (425 aa).

Over residues 1-10 (MESPDSSSGS) the composition is skewed to polar residues. The segment at 1-34 (MESPDSSSGSAPPRVLRRQQQQPGSAPELPPGFR) is disordered. The segment covering 12–23 (PPRVLRRQQQQP) has biased composition (low complexity). The region spanning 29 to 200 (LPPGFRFHPT…DWVLCRIYKK (172 aa)) is the NAC domain. The DNA-binding element occupies 129–206 (VGVKKALVFY…IYKKTNKAGA (78 aa)).

In terms of tissue distribution, highest expression in stamens. Expressed in leaves.

It is found in the nucleus. Transcription factor of the NAC family associated with male fertility. Involved in anther development, but not in senescence. Reduced expression of NAC5 via RNAi leads to male-sterility. This chain is NAC domain-containing protein 10, found in Oryza sativa subsp. japonica (Rice).